The chain runs to 533 residues: Monogalactosyldiacylglycerol synthase 1, chloroplastic (533 aa).

Residues histidine 155 and proline 189 each contribute to the a 1,2-diacyl-sn-glycero-3-phospho-(1'-sn-glycerol) site. Histidine 155 serves as a coordination point for UDP. Residues 192–215 (QLPRSYNFLVKHGTLWKMTYYGTS) are required for binding to diacyl glycerol. Residues arginine 324, phenylalanine 413, isoleucine 414, 434–438 (GTIAE), and glutamate 456 each bind UDP.

The protein belongs to the glycosyltransferase 28 family. In terms of assembly, homodimer. In terms of tissue distribution, expressed in roots, stems, leaves, flowers, siliques and seeds.

It localises to the plastid. Its subcellular location is the chloroplast inner membrane. It catalyses the reaction a 1,2-diacyl-sn-glycerol + UDP-alpha-D-galactose = a 1,2-diacyl-3-O-(beta-D-galactosyl)-sn-glycerol + UDP + H(+). It carries out the reaction 1,2-di-(9Z,12Z-octadecadienoyl)-sn-glycerol + UDP-alpha-D-galactose = 1,2-di-(9Z,12Z-octadecadienoyl)-3-beta-D-galactosyl-sn-glycerol + UDP + H(+). The enzyme catalyses 1-(9Z-octadecenoyl)-2-hexadecanoyl-sn-glycerol + UDP-alpha-D-galactose = 1-(9Z-octadecenoyl)-2-hexadecanoyl-3-beta-D-galactosyl-sn-glycerol + UDP + H(+). The catalysed reaction is 1,2-di-(9Z-octadecenoyl)-sn-glycerol + UDP-alpha-D-galactose = 1,2-di-(9Z-octadecenoyl)-3-beta-D-galactosyl-sn-glycerol + UDP + H(+). With respect to regulation, activated by phosphatidate (PA) and phosphatidylglycerol (PG). Inhibited by galvestine-1. Functionally, involved in the synthesis of the major structural component of photosynthetic membranes. Required for proper thylakoid membrane biogenesis. Does not discriminate between prokaryotic (18:1/16:0) or eukaryotic (18:2/18:2) 1,2-diacylglycerol species, but operates with some preference for the prokaryotic one. Is responsible for most galactolipid synthesis in chloroplasts. Required for the formation of thylakoid membranes and functional photosynthetic electron transport during cotyledons greening in young seedlings. May link galactolipid synthesis with the coordinated transcriptional regulation of chloroplasts and other organelles during cotyledon greening. The polypeptide is Monogalactosyldiacylglycerol synthase 1, chloroplastic (Arabidopsis thaliana (Mouse-ear cress)).